Consider the following 337-residue polypeptide: Inositol 2-dehydrogenase (337 aa).

This sequence belongs to the Gfo/Idh/MocA family. Homotetramer.

The catalysed reaction is myo-inositol + NAD(+) = scyllo-inosose + NADH + H(+). Its function is as follows. Involved in the oxidation of myo-inositol (MI) to 2-keto-myo-inositol (2KMI or 2-inosose). The chain is Inositol 2-dehydrogenase from Serratia proteamaculans (strain 568).